The following is a 391-amino-acid chain: Thyroid hormone receptor alpha-B (391 aa).

Positions 1 to 32 (MAQWPEKEEEEQPMFGEEYTGYIPSYLEKDEP) are modulating. 2 NR C4-type zinc fingers span residues 33-53 (CVVC…CEGC) and 71-95 (CKYD…FKKC). Positions 33–100 (CVVCGDKATG…RFKKCIAVGM (68 aa)) form a DNA-binding region, nuclear receptor. In terms of domain architecture, NR LBD spans 143–388 (AEWELIRMVT…PPLFLEVFED (246 aa)).

The protein belongs to the nuclear hormone receptor family. NR1 subfamily.

The protein localises to the nucleus. Functionally, high affinity receptor for triiodothyronine. The polypeptide is Thyroid hormone receptor alpha-B (thra2) (Paralichthys olivaceus (Bastard halibut)).